The primary structure comprises 513 residues: ATP synthase subunit alpha (513 aa).

Residue 169-176 (GDRQTGKT) coordinates ATP.

It belongs to the ATPase alpha/beta chains family. F-type ATPases have 2 components, CF(1) - the catalytic core - and CF(0) - the membrane proton channel. CF(1) has five subunits: alpha(3), beta(3), gamma(1), delta(1), epsilon(1). CF(0) has three main subunits: a(1), b(2) and c(9-12). The alpha and beta chains form an alternating ring which encloses part of the gamma chain. CF(1) is attached to CF(0) by a central stalk formed by the gamma and epsilon chains, while a peripheral stalk is formed by the delta and b chains.

The protein localises to the cell inner membrane. The enzyme catalyses ATP + H2O + 4 H(+)(in) = ADP + phosphate + 5 H(+)(out). Produces ATP from ADP in the presence of a proton gradient across the membrane. The alpha chain is a regulatory subunit. This is ATP synthase subunit alpha from Enterobacter sp. (strain 638).